We begin with the raw amino-acid sequence, 313 residues long: Tyrosine recombinase XerC (313 aa).

The Core-binding (CB) domain maps to 1 to 85 (MNDQVEAFLR…AVKSFFAFLT (85 aa)). The region spanning 106-291 (DLPRALTPHQ…NHASSAQPVR (186 aa)) is the Tyr recombinase domain. Active-site residues include Arg-147, Lys-171, His-243, Arg-246, and His-269. Tyr-278 acts as the O-(3'-phospho-DNA)-tyrosine intermediate in catalysis.

It belongs to the 'phage' integrase family. XerC subfamily. As to quaternary structure, forms a cyclic heterotetrameric complex composed of two molecules of XerC and two molecules of XerD.

It is found in the cytoplasm. Site-specific tyrosine recombinase, which acts by catalyzing the cutting and rejoining of the recombining DNA molecules. The XerC-XerD complex is essential to convert dimers of the bacterial chromosome into monomers to permit their segregation at cell division. It also contributes to the segregational stability of plasmids. This is Tyrosine recombinase XerC from Roseiflexus sp. (strain RS-1).